We begin with the raw amino-acid sequence, 209 residues long: Probable GTP-binding protein EngB (209 aa).

One can recognise an EngB-type G domain in the interval 22 to 198 (TPLEIAFVGR…NRTVGSWLDA (177 aa)). Residues Ser37 and Thr59 each coordinate Mg(2+).

This sequence belongs to the TRAFAC class TrmE-Era-EngA-EngB-Septin-like GTPase superfamily. EngB GTPase family. Mg(2+) is required as a cofactor.

In terms of biological role, necessary for normal cell division and for the maintenance of normal septation. The chain is Probable GTP-binding protein EngB from Neisseria meningitidis serogroup B (strain ATCC BAA-335 / MC58).